We begin with the raw amino-acid sequence, 220 residues long: Carbonic anhydrase (220 aa).

Zn(2+)-binding residues include Cys39, Asp41, His98, and Cys101.

It belongs to the beta-class carbonic anhydrase family. The cofactor is Zn(2+).

It carries out the reaction hydrogencarbonate + H(+) = CO2 + H2O. The sequence is that of Carbonic anhydrase (cynT) from Pseudomonas aeruginosa (strain ATCC 15692 / DSM 22644 / CIP 104116 / JCM 14847 / LMG 12228 / 1C / PRS 101 / PAO1).